Consider the following 823-residue polypeptide: Mitochondrial intermediate peptidase 2 (823 aa).

A mitochondrion-targeting transit peptide spans 1–33; that stretch reads MRRLQQSLRRRSARRCPFILIPHRLLTTSYASY. The tract at residues 532-553 is disordered; it reads IDGDGLPEDWDKPYGPGLEADK. Histidine 595 serves as a coordination point for Zn(2+). Glutamate 596 is a catalytic residue. Histidine 599 and histidine 602 together coordinate Zn(2+).

Belongs to the peptidase M3 family. The cofactor is Zn(2+).

It localises to the mitochondrion matrix. It catalyses the reaction Release of an N-terminal octapeptide as second stage of processing of some proteins imported into the mitochondrion.. Functionally, cleaves proteins, imported into the mitochondrion, to their mature size. While most mitochondrial precursor proteins are processed to the mature form in one step by mitochondrial processing peptidase (MPP), the sequential cleavage by MIP of an octapeptide after initial processing by MPP is a required step for a subgroup of nuclear-encoded precursor proteins destined for the matrix or the inner membrane. The sequence is that of Mitochondrial intermediate peptidase 2 (OCT2) from Cryptococcus neoformans var. neoformans serotype D (strain B-3501A) (Filobasidiella neoformans).